The primary structure comprises 102 residues: uncharacterized protein (102 aa).

The helical transmembrane segment at 7-23 (IVFVSCVILGLAACSSQ) threads the bilayer.

The protein resides in the membrane. This is an uncharacterized protein from Haemophilus influenzae (strain ATCC 51907 / DSM 11121 / KW20 / Rd).